Here is a 195-residue protein sequence, read N- to C-terminus: HTH-type transcriptional regulator TtmR (195 aa).

Residues 47-177 (DSQLCFAVYA…LLDNLASMRD (131 aa)) enclose the HTH marR-type domain. Positions 93-116 (VKEIGSRLFLDSGTLTPLLKRLEA) form a DNA-binding region, H-T-H motif.

It localises to the cytoplasm. Functionally, formaldehyde-responsive transcription factor that modulates resistance to stress induced by formaldehyde. Impacts the expression of a number of genes encoding transcription factors and/or involved in stress response, including efgA, and which probably collectively trigger a formaldehyde-specific physiological response. Required for optimal transition to methylotrophy. Not involved in a general stress response. The protein is HTH-type transcriptional regulator TtmR of Methylorubrum extorquens (strain PA1) (Methylobacterium extorquens).